A 225-amino-acid chain; its full sequence is Methyl-CpG-binding domain-containing protein 6 (225 aa).

Residues 25–92 are disordered; sequence GDGTLDSSAK…PGWRVEDKIR (68 aa). The 76-residue stretch at 71–146 folds into the MBD domain; the sequence is RKRAAPGDNW…ENTYFNPDHF (76 aa).

As to quaternary structure, homodimer and heterodimer with MBD5. Interacts with DDM1 via its MBD domain. Interacts with NTF2, RPS2C, HDA6 and AGO4. In terms of tissue distribution, expressed in rosette leaves, buds, flowers, stems, mature seeds and roots.

The protein resides in the nucleus. It localises to the chromosome. The protein localises to the nucleolus. In terms of biological role, transcriptional regulator that binds CpG, CpNpN and CpNpG (N is A, T, or C) islands in promoters regardless the DNA methylation status. Plays probably a role in gene silencing. May associate with histone deacetylase proteins (HDAC). Required for nucleolar dominance that consist in the silencing of rRNA genes inherited from one progenitor in genetic hybrids. Recruited to rRNA genes in a DRM2-dependent manner. Maintains gene silencing by interacting with RNA binding proteins (e.g. NTF2, RPS2C, HDA6 and AGO4) and by regulating DNA methylation status. The protein is Methyl-CpG-binding domain-containing protein 6 of Arabidopsis thaliana (Mouse-ear cress).